The sequence spans 207 residues: Thiamine-phosphate synthase (207 aa).

Residues 36-40 (QLRMK) and N68 each bind 4-amino-2-methyl-5-(diphosphooxymethyl)pyrimidine. 2 residues coordinate Mg(2+): D69 and D88. S106 lines the 4-amino-2-methyl-5-(diphosphooxymethyl)pyrimidine pocket. 132-134 (TNT) serves as a coordination point for 2-[(2R,5Z)-2-carboxy-4-methylthiazol-5(2H)-ylidene]ethyl phosphate. Residue K135 participates in 4-amino-2-methyl-5-(diphosphooxymethyl)pyrimidine binding. 2-[(2R,5Z)-2-carboxy-4-methylthiazol-5(2H)-ylidene]ethyl phosphate is bound by residues G162 and 182 to 183 (VS).

Belongs to the thiamine-phosphate synthase family. Mg(2+) serves as cofactor.

It catalyses the reaction 2-[(2R,5Z)-2-carboxy-4-methylthiazol-5(2H)-ylidene]ethyl phosphate + 4-amino-2-methyl-5-(diphosphooxymethyl)pyrimidine + 2 H(+) = thiamine phosphate + CO2 + diphosphate. It carries out the reaction 2-(2-carboxy-4-methylthiazol-5-yl)ethyl phosphate + 4-amino-2-methyl-5-(diphosphooxymethyl)pyrimidine + 2 H(+) = thiamine phosphate + CO2 + diphosphate. The enzyme catalyses 4-methyl-5-(2-phosphooxyethyl)-thiazole + 4-amino-2-methyl-5-(diphosphooxymethyl)pyrimidine + H(+) = thiamine phosphate + diphosphate. It functions in the pathway cofactor biosynthesis; thiamine diphosphate biosynthesis; thiamine phosphate from 4-amino-2-methyl-5-diphosphomethylpyrimidine and 4-methyl-5-(2-phosphoethyl)-thiazole: step 1/1. Functionally, condenses 4-methyl-5-(beta-hydroxyethyl)thiazole monophosphate (THZ-P) and 2-methyl-4-amino-5-hydroxymethyl pyrimidine pyrophosphate (HMP-PP) to form thiamine monophosphate (TMP). In Methanococcus maripaludis (strain C5 / ATCC BAA-1333), this protein is Thiamine-phosphate synthase.